The chain runs to 22 residues: Mu-conotoxin GIIIB (22 aa).

Disulfide bonds link Cys-3–Cys-15, Cys-4–Cys-20, and Cys-10–Cys-21. Residues Pro-6 and Pro-7 each carry the 4-hydroxyproline; partial modification. A 4-hydroxyproline modification is found at Pro-17. Ala-22 carries the alanine amide modification.

The protein belongs to the conotoxin M superfamily. As to expression, expressed by the venom duct.

It is found in the secreted. Its function is as follows. Mu-conotoxins block voltage-gated sodium channels (Nav). This is Mu-conotoxin GIIIB from Conus geographus (Geography cone).